The primary structure comprises 538 residues: Sterile alpha motif domain-containing protein 1 (538 aa).

Over residues 1–11 (MAGPPALPPPE) the composition is skewed to pro residues. 2 disordered regions span residues 1 to 30 (MAGP…ASPH) and 92 to 247 (SYRN…GAAR). The span at 12-29 (TAAAATTAAAASSSAASP) shows a compositional bias: low complexity. Residues 23-99 (SSSAASPHYQ…SISYRNAARV (77 aa)) enclose the SAMD1-like winged helix (WH) domain. At T107 the chain carries Phosphothreonine. A compositionally biased stretch (low complexity) spans 115-125 (PRGAPAAAAAA). The span at 126 to 139 (APPPTPAPPPPPAP) shows a compositional bias: pro residues. Low complexity predominate over residues 140-158 (VAAAAPARAPRAAAAAATA). S161 is modified (phosphoserine). Over residues 168-177 (GPRAQRAAPL) the composition is skewed to low complexity. A compositionally biased stretch (pro residues) spans 178–236 (AAPPPAPAAPPAVAPPAGPRRAPPPAVAAREPPLPPPPQPPAPPQQQQPPPPQPQPPPE). Low complexity predominate over residues 237–247 (GGAVRAGGAAR). At S261 the chain carries Phosphoserine. The segment covering 282–291 (AARGRLERTR) has biased composition (basic and acidic residues). A disordered region spans residues 282–458 (AARGRLERTR…PPGRKEKPSD (177 aa)). Positions 328-351 (KEEEEDDDEDEDEEDDVSEGSEVP) are enriched in acidic residues. Residues 425–436 (SPSPVPLPPGKP) show a composition bias toward pro residues. Positions 462 to 530 (WTVMDVVEYF…KVLQQGHFED (69 aa)) constitute an SAM domain.

As to quaternary structure, homopolymerize into a closed pentameric ring. Interacts (via SAM domain) with L3MBTL3 (via SAM domain); the interaction mediates L3MBTL3 binding to chromatin. Interacts (via WH domain) with KDM1A; the interaction modulates KDM1A function. As to expression, expressed in atherosclerotic lesions, not in normal intima. Expressed in foam cells.

Its subcellular location is the nucleus. It localises to the chromosome. The protein resides in the secreted. In terms of biological role, unmethylated CpG islands (CGIs)-binding protein which localizes to H3K4me3-decorated CGIs, where it acts as a transcriptional repressor. Tethers L3MBTL3 to chromatin and interacts with the KDM1A histone demethylase complex to modulate H3K4me2 and H3K4me3 levels at CGIs. Plays a role in atherogenesis by binding with LDL on cell surface and promoting LDL oxidation which leads to the formation of foam cell. The polypeptide is Sterile alpha motif domain-containing protein 1 (Homo sapiens (Human)).